Consider the following 1577-residue polypeptide: Dynamin-binding protein (1577 aa).

Residue Met1 is modified to N-acetylmethionine. SH3 domains lie at 2–61 (EAGS…IVTI), 66–126 (EGER…ELCL), 145–204 (YSMG…LLGP), and 243–302 (EPGT…LCPD). Disordered regions lie at residues 211 to 244 (SVSSGNQDDCIVNGEVDTPVGEEEIGPDEDEEEP) and 335 to 395 (EEQR…WEMP). The segment covering 230–244 (VGEEEIGPDEDEEEP) has biased composition (acidic residues). A compositionally biased stretch (basic and acidic residues) spans 335-344 (EEQRHETSDH). Ser496 bears the Phosphoserine mark. Disordered stretches follow at residues 591-624 (GSSKLITEQELPERRKALRPPPPRPCTPVSTSPH) and 639-659 (VRPSRPAPLPPSAQQRTNAVS). Over residues 639-649 (VRPSRPAPLPP) the composition is skewed to pro residues. Residue Ser684 is modified to Phosphoserine. The stretch at 693–757 (LVLVRIEEME…ELQQLREMTL (65 aa)) forms a coiled coil. The DH domain occupies 784–967 (KRAKVIEELL…KEINVNINEY (184 aa)). The 210-residue stretch at 1008 to 1217 (LKHLTGFAPQ…LKVAGREGNL (210 aa)) folds into the BAR domain. A coiled-coil region spans residues 1136–1173 (ERAEKLKDKKTLEELQSARNNYEALNAQLLDELPKFHQ). One can recognise an SH3 5 domain in the interval 1285 to 1348 (PPEKLFQAER…YSSFLKPYNP (64 aa)). Residues 1348 to 1487 (PRRSHSDASV…SVPGRNGQSQ (140 aa)) are disordered. Polar residues predominate over residues 1376–1405 (RQNSGSTLTFNPSSMAVSFTSGSCQKQPQD). Positions 1419-1442 (SASLNPSNSESSPSRCPSDPDSTS) are enriched in low complexity. An SH3 6 domain is found at 1513–1576 (EGNQVYFAVY…PSNYIRKTEY (64 aa)).

Binds DNM1 via its N-terminal SH3 domains. The C-terminal SH3 domain binds a complex containing actin, tubulin, Hsp70 and actin-regulatory proteins, such as ENAH, EVL, WIRE, CR16, WAVE1 and NAP1L1. Interacts with FASLG. Interacts (via SH3 domain 6) with WASL. Interacts (via SH3 domain 6) interacts with ENAH. Interacts (via C-terminal domain) with TJP1; required for the apical cell-cell junction localization of DNMBP. As to quaternary structure, (Microbial infection) Interacts (via SH3 domain 6) with L.monocytogenes InlC. In terms of tissue distribution, detected in heart, brain, lung, liver, skeletal muscle, kidney and pancreas.

Its subcellular location is the cytoplasm. The protein localises to the golgi apparatus. It localises to the golgi stack. The protein resides in the cytoskeleton. It is found in the synapse. Its subcellular location is the cell junction. Its function is as follows. Plays a critical role as a guanine nucleotide exchange factor (GEF) for CDC42 in several intracellular processes associated with the actin and microtubule cytoskeleton. Regulates the structure of apical junctions through F-actin organization in epithelial cells. Participates in the normal lumenogenesis of epithelial cell cysts by regulating spindle orientation. Plays a role in ciliogenesis. May play a role in membrane trafficking between the cell surface and the Golgi. The polypeptide is Dynamin-binding protein (Homo sapiens (Human)).